Here is a 232-residue protein sequence, read N- to C-terminus: Large ribosomal subunit protein uL1 (232 aa).

This sequence belongs to the universal ribosomal protein uL1 family. As to quaternary structure, part of the 50S ribosomal subunit.

Binds directly to 23S rRNA. The L1 stalk is quite mobile in the ribosome, and is involved in E site tRNA release. Functionally, protein L1 is also a translational repressor protein, it controls the translation of the L11 operon by binding to its mRNA. The sequence is that of Large ribosomal subunit protein uL1 from Aromatoleum aromaticum (strain DSM 19018 / LMG 30748 / EbN1) (Azoarcus sp. (strain EbN1)).